Here is a 170-residue protein sequence, read N- to C-terminus: Protein-lysine myristoyltransferase HlyC (170 aa).

Active-site residues include histidine 23 and aspartate 92. Position 151 (histidine 151) interacts with heme.

This sequence belongs to the RTX toxin acyltransferase family. Monomer. Proteolytically cleaved by the protease systems ClpAP, ClpXP and FtsH, leading to its degradation.

The protein localises to the cytoplasm. The enzyme catalyses tetradecanoyl-[ACP] + L-lysyl-[protein] = N(6)-tetradecanoyl-L-lysyl-[protein] + holo-[ACP] + H(+). With respect to regulation, the acyltransferase activity is inhibited by heme. Its function is as follows. Protein-lysine myristoyltransferase that catalyzes myristoylation of the protoxin (HlyA) at two internal lysine residues, thereby converting it to the active toxin. This chain is Protein-lysine myristoyltransferase HlyC, found in Escherichia coli.